The sequence spans 452 residues: Activating transcription factor 7-interacting protein 2 (452 aa).

Residue S184 is modified to Phosphoserine. The segment at 185 to 206 (RSKRISSVNHTPLNSSEKAGRK) is disordered. S257 carries the phosphoserine modification. In terms of domain architecture, Fibronectin type-III spans 346–450 (PPQKPELKVK…IKSIPRFSEN (105 aa)).

It belongs to the MCAF family. Interacts with MBD1, SETDB1 and SP1. Probably forms a complex with SETDB1 and MBD1. As to expression, expressed in testis.

It localises to the nucleus. In terms of biological role, recruiter that couples transcriptional factors to general transcription apparatus and thereby modulates transcription regulation and chromatin formation. Can both act as an activator or a repressor depending on the context. Mediates MBD1-dependent transcriptional repression, probably by recruiting complexes containing SETDB1. The complex formed with MBD1 and SETDB1 represses transcription and probably couples DNA methylation and histone H3 'Lys-9' trimethylation (H3K9me3) activity. The protein is Activating transcription factor 7-interacting protein 2 (Atf7ip2) of Mus musculus (Mouse).